Here is a 395-residue protein sequence, read N- to C-terminus: L-methionine gamma-lyase (395 aa).

Pyridoxal 5'-phosphate is bound by residues 56–58 (YTR) and 86–87 (GM). Y111 contacts substrate. Position 206–208 (206–208 (SVT)) interacts with pyridoxal 5'-phosphate. An N6-(pyridoxal phosphate)lysine modification is found at K209. R373 is a binding site for substrate.

This sequence belongs to the trans-sulfuration enzymes family. L-methionine gamma-lyase subfamily. In terms of assembly, homotetramer. The cofactor is pyridoxal 5'-phosphate.

It catalyses the reaction L-methionine + H2O = methanethiol + 2-oxobutanoate + NH4(+). It carries out the reaction L-homocysteine + H2O = 2-oxobutanoate + hydrogen sulfide + NH4(+) + H(+). In terms of biological role, catalyzes the alpha,gamma-elimination of L-methionine to produce methanethiol, 2-oxobutanoate and ammonia; methanethiol (methyl mercaptan) is considered to be one of the main causes of the oral malodor associated with periodontitis. Also displays homocysteine desulfhydrase activity, degrading homocysteine to produce hydrogen sulfide, 2-oxobutanoate and ammonia. L-cysteine and S-methyl-L-cysteine are poor substrates for the enzyme. Its function is as follows. Plays an important role in the resistance of F.nucleatum to the antibacterial agent 3-chloro-DL-alanine (3CA), thanks to its 3CA chloride-lyase (deaminating) activity. The chain is L-methionine gamma-lyase from Fusobacterium nucleatum subsp. polymorphum (Fusobacterium polymorphum).